Consider the following 287-residue polypeptide: Myogenin (287 aa).

2 positions are modified to phosphoserine; by CaMK2G: serine 77 and serine 79. The bHLH domain maps to 81-132; sequence DRRRAATLREKRRLKKVNEAFEALKRSTLLNPNQRLPKVEILRSAIQYIERL. Threonine 87 is subject to Phosphothreonine; by CaMK2G.

In terms of assembly, homodimer and heterodimer with E12; heterodimerization enhances MYOG DNA-binding and transcriptional activities. Interacts with SMARCA4/BRG1/BAF190A. Interacts (via C-terminal region) with SSRP1 and SUPT16H; the interaction is indicative of an interaction with the FACT complex. Interacts with CSRP3. Post-translationally, phosphorylated by CAMK2G on threonine and serine amino acids in a muscle activity-dependent manner. Phosphorylation of Thr-87 impairs both DNA-binding and trans-activation functions in contracting muscles. In terms of tissue distribution, expressed in muscle (at protein level).

It is found in the nucleus. Functionally, acts as a transcriptional activator that promotes transcription of muscle-specific target genes and plays a role in muscle differentiation, cell cycle exit and muscle atrophy. Essential for the development of functional embryonic skeletal fiber muscle differentiation. However is dispensable for postnatal skeletal muscle growth; phosphorylation by CAMK2G inhibits its transcriptional activity in respons to muscle activity. Required for the recruitment of the FACT complex to muscle-specific promoter regions, thus promoting gene expression initiation. During terminal myoblast differentiation, plays a role as a strong activator of transcription at loci with an open chromatin structure previously initiated by MYOD1. Together with MYF5 and MYOD1, co-occupies muscle-specific gene promoter core regions during myogenesis. Also cooperates with myocyte-specific enhancer factor MEF2D and BRG1-dependent recruitment of SWI/SNF chromatin-remodeling enzymes to alter chromatin structure at myogenic late gene promoters. Facilitates cell cycle exit during terminal muscle differentiation through the up-regulation of miR-20a expression, which in turn represses genes involved in cell cycle progression. Binds to the E-box containing (E1) promoter region of the miR-20a gene. Also plays a role in preventing reversal of muscle cell differentiation. Contributes to the atrophy-related gene expression in adult denervated muscles. Induces fibroblasts to differentiate into myoblasts. The chain is Myogenin (Myog) from Rattus norvegicus (Rat).